The primary structure comprises 432 residues: Gamma-glutamyl phosphate reductase (432 aa).

Belongs to the gamma-glutamyl phosphate reductase family.

It is found in the cytoplasm. The enzyme catalyses L-glutamate 5-semialdehyde + phosphate + NADP(+) = L-glutamyl 5-phosphate + NADPH + H(+). The protein operates within amino-acid biosynthesis; L-proline biosynthesis; L-glutamate 5-semialdehyde from L-glutamate: step 2/2. In terms of biological role, catalyzes the NADPH-dependent reduction of L-glutamate 5-phosphate into L-glutamate 5-semialdehyde and phosphate. The product spontaneously undergoes cyclization to form 1-pyrroline-5-carboxylate. This is Gamma-glutamyl phosphate reductase from Corynebacterium glutamicum (strain R).